Consider the following 214-residue polypeptide: Small ribosomal subunit protein uS4c (214 aa).

2 stretches are compositionally biased toward basic residues: residues Met-1–Arg-14 and Leu-36–Gln-46. Residues Met-1 to Gln-46 are disordered. The 62-residue stretch at Met-92–Asn-153 folds into the S4 RNA-binding domain.

Belongs to the universal ribosomal protein uS4 family. As to quaternary structure, part of the 30S ribosomal subunit. Contacts protein S5. The interaction surface between S4 and S5 is involved in control of translational fidelity.

The protein resides in the plastid. It localises to the chloroplast. Functionally, one of the primary rRNA binding proteins, it binds directly to 16S rRNA where it nucleates assembly of the body of the 30S subunit. Its function is as follows. With S5 and S12 plays an important role in translational accuracy. This is Small ribosomal subunit protein uS4c (rps4) from Pelargonium hortorum (Common geranium).